A 154-amino-acid polypeptide reads, in one-letter code: Myoglobin (154 aa).

Positions 2–148 (GLSDGEWQIV…FRNDIAAKYK (147 aa)) constitute a Globin domain. The residue at position 4 (S4) is a Phosphoserine. Residue H65 coordinates nitrite. H65 provides a ligand contact to O2. A Phosphothreonine modification is found at T68. H94 contacts heme b.

This sequence belongs to the globin family. As to quaternary structure, monomeric.

It is found in the cytoplasm. It localises to the sarcoplasm. The enzyme catalyses Fe(III)-heme b-[protein] + nitric oxide + H2O = Fe(II)-heme b-[protein] + nitrite + 2 H(+). The catalysed reaction is H2O2 + AH2 = A + 2 H2O. Functionally, monomeric heme protein which primary function is to store oxygen and facilitate its diffusion within muscle tissues. Reversibly binds oxygen through a pentacoordinated heme iron and enables its timely and efficient release as needed during periods of heightened demand. Depending on the oxidative conditions of tissues and cells, and in addition to its ability to bind oxygen, it also has a nitrite reductase activity whereby it regulates the production of bioactive nitric oxide. Under stress conditions, like hypoxia and anoxia, it also protects cells against reactive oxygen species thanks to its pseudoperoxidase activity. The protein is Myoglobin (MB) of Canis lupus familiaris (Dog).